Here is a 147-residue protein sequence, read N- to C-terminus: C-glycoside deglycosidase beta subunit (147 aa).

It belongs to the C-glycoside deglycosidase beta subunit family. Heterooctamer composed of four alpha subunits (DfgA) and four beta subunits (DfgB). The cofactor is Mn(2+).

The catalysed reaction is 3''-dehydroisoorientin = 1,5-anhydro-D-erythro-hex-1-en-3-ulose + luteolin. It catalyses the reaction 3''-dehydroisovitexin = 1,5-anhydro-D-erythro-hex-1-en-3-ulose + apigenin. With respect to regulation, activity is strongly reduced in the presence of chelating agents. Its function is as follows. Carbon-carbon bond-cleaving enzyme which participates in the metabolism of C-glycosides. Acts on the C6-glycosylated compounds 3''-dehydroisoorientin (3''-oxo-homoorientin) and 3''-dehydroisovitexin (3''-oxo-isovitexin). The polypeptide is C-glycoside deglycosidase beta subunit (Eubacterium cellulosolvens (strain ATCC 43171 / JCM 9499 / 6) (Cillobacterium cellulosolvens)).